A 459-amino-acid chain; its full sequence is Cysteine--tRNA ligase (459 aa).

Residue Cys28 participates in Zn(2+) binding. The short motif at 30 to 40 (VTIYDLCHIGH) is the 'HIGH' region element. Residues Cys209, His234, and Glu238 each coordinate Zn(2+). The short motif at 266-270 (KMSKS) is the 'KMSKS' region element. Lys269 is a binding site for ATP.

This sequence belongs to the class-I aminoacyl-tRNA synthetase family. As to quaternary structure, monomer. The cofactor is Zn(2+).

The protein localises to the cytoplasm. It catalyses the reaction tRNA(Cys) + L-cysteine + ATP = L-cysteinyl-tRNA(Cys) + AMP + diphosphate. In Vibrio cholerae serotype O1 (strain ATCC 39541 / Classical Ogawa 395 / O395), this protein is Cysteine--tRNA ligase.